The following is a 700-amino-acid chain: Elongation factor G (700 aa).

A tr-type G domain is found at 8-290 (ERYRNIGISA…AVVEYLPSPV (283 aa)). GTP-binding positions include 17–24 (AHIDAGKT), 88–92 (DTPGH), and 142–145 (NKMD).

This sequence belongs to the TRAFAC class translation factor GTPase superfamily. Classic translation factor GTPase family. EF-G/EF-2 subfamily.

It localises to the cytoplasm. In terms of biological role, catalyzes the GTP-dependent ribosomal translocation step during translation elongation. During this step, the ribosome changes from the pre-translocational (PRE) to the post-translocational (POST) state as the newly formed A-site-bound peptidyl-tRNA and P-site-bound deacylated tRNA move to the P and E sites, respectively. Catalyzes the coordinated movement of the two tRNA molecules, the mRNA and conformational changes in the ribosome. The chain is Elongation factor G from Mannheimia succiniciproducens (strain KCTC 0769BP / MBEL55E).